Reading from the N-terminus, the 337-residue chain is UDP-3-O-acylglucosamine N-acyltransferase (337 aa).

H238 (proton acceptor) is an active-site residue.

The protein belongs to the transferase hexapeptide repeat family. LpxD subfamily. Homotrimer.

It catalyses the reaction a UDP-3-O-[(3R)-3-hydroxyacyl]-alpha-D-glucosamine + a (3R)-hydroxyacyl-[ACP] = a UDP-2-N,3-O-bis[(3R)-3-hydroxyacyl]-alpha-D-glucosamine + holo-[ACP] + H(+). It participates in bacterial outer membrane biogenesis; LPS lipid A biosynthesis. Its function is as follows. Catalyzes the N-acylation of UDP-3-O-acylglucosamine using 3-hydroxyacyl-ACP as the acyl donor. Is involved in the biosynthesis of lipid A, a phosphorylated glycolipid that anchors the lipopolysaccharide to the outer membrane of the cell. This chain is UDP-3-O-acylglucosamine N-acyltransferase, found in Xanthomonas euvesicatoria pv. vesicatoria (strain 85-10) (Xanthomonas campestris pv. vesicatoria).